Here is a 388-residue protein sequence, read N- to C-terminus: L-arabinitol 4-dehydrogenase (388 aa).

Zn(2+) contacts are provided by cysteine 55, histidine 80, glutamate 81, cysteine 110, cysteine 113, cysteine 116, cysteine 124, and glutamate 165. NAD(+) contacts are provided by residues 192 to 193, aspartate 213, arginine 218, isoleucine 293, and 317 to 319; these read PI and QYR.

Belongs to the zinc-containing alcohol dehydrogenase family. Homotetramer. Requires Zn(2+) as cofactor.

The enzyme catalyses L-arabinitol + NAD(+) = L-xylulose + NADH + H(+). Its pathway is carbohydrate degradation; L-arabinose degradation via L-arabinitol; D-xylulose 5-phosphate from L-arabinose (fungal route): step 2/5. Its function is as follows. Catalyzes the NAD-dependent oxidation of L-arabinitol to L-xylulose in the fungal L-arabinose catabolic pathway. L-arabinose catabolism is important for using plant material as a carbon source. NADP cannot act as a cosubstrate. The protein is L-arabinitol 4-dehydrogenase (lad) of Talaromyces emersonii (Thermophilic fungus).